Consider the following 241-residue polypeptide: MINKIKILFSFLALLLSFTSYAKAEDLHDKSELTDLALANAYGQYNHPFIKENIKSDEISGEKDLIFRNQGDSGNDLRVKFATADLAQKFKNKNVDIYGASFYYKCEKISENISECLYGGTTLNSEKLAQERVIGANVWVDGIQKETELIRTNKKNVTLQELDIKIRKILSDKYKIYYKDSEISKGLIEFDMKTPRDYSFDIYDLKGENDYEIDKIYEDNKTLKSDDISHIDVNLYTKKKV.

An N-terminal signal peptide occupies residues 1–24 (MINKIKILFSFLALLLSFTSYAKA). A disulfide bond links cysteine 106 and cysteine 116. Residues aspartate 191, histidine 230, and aspartate 232 each contribute to the Zn(2+) site.

Belongs to the staphylococcal/streptococcal toxin family. Interacts with host MHC class II molecules composed of alpha/HLA-DRA and beta/HLA-DRB1 chains. Interacts with host TCR alpha-chain TRAV27. Requires Zn(2+) as cofactor.

It localises to the secreted. Staphylococcal enterotoxin that activates the host immune system by binding as unprocessed molecules to major histocompatibility (MHC) complex class II and T-cell receptor (TCR) molecules via their alpha domain, in particular TRAV27. In turn, this ternary complex activates a large number of T-lymphocytes initiating a systemic release of pro-inflammatory cytokines. Also causes the intoxication staphylococcal food poisoning syndrome. The illness characterized by high fever, hypotension, diarrhea, shock, and in some cases death. This chain is Enterotoxin type H (entH), found in Staphylococcus aureus.